Consider the following 475-residue polypeptide: MSAVLKPQADLAIADISLADWGRKEIKIAETEMPGLMAIREEFAAAQPLKGARITGSLHMTIQTAVLIETLKALGADVRWASCNIFSTQDHAAAAIAAGGTPVFAIKGESLEDYWDYTHRIFDFGAKGTPGEGPNMILDDGGDATLLMHLGQRAEKDLSVVANPTSEEERILFAAIKAKIAQDPTWYTRKSAEIIGVTEETTTGVHRLNEMSAKGTLLFRAINVNDSVTKSKFDNLYGCRESLVDGIKRATDVMIAGKVALVAGYGDVGKGCAQALAALRAQVWVTEIDPINALQAAMEGYKVVTMEYAADKADIFVTTTGNKDVIRHEHMVAMKNEAIVCNIGHFDNEIDVASIEKYRWEEVKPQVDHVIFPDGKRITLLAKGRLVNLGCATGHPSFVMSSSFANQTIAQIELFTKPDAYQAGKVYVLPKVLDEKVARLHLKKVGAQLTELTDAQAAYIGVKKEGPYKADTYRY.

Threonine 61, aspartate 140, and glutamate 200 together coordinate substrate. 201-203 provides a ligand contact to NAD(+); that stretch reads TTT. The substrate site is built by lysine 230 and aspartate 234. Residues asparagine 235, 264-269, glutamate 287, asparagine 322, 343-345, and asparagine 388 contribute to the NAD(+) site; these read GYGDVG and IGH.

The protein belongs to the adenosylhomocysteinase family. NAD(+) serves as cofactor.

Its subcellular location is the cytoplasm. It carries out the reaction S-adenosyl-L-homocysteine + H2O = L-homocysteine + adenosine. It functions in the pathway amino-acid biosynthesis; L-homocysteine biosynthesis; L-homocysteine from S-adenosyl-L-homocysteine: step 1/1. Its function is as follows. May play a key role in the regulation of the intracellular concentration of adenosylhomocysteine. This chain is Adenosylhomocysteinase, found in Paracidovorax citrulli (strain AAC00-1) (Acidovorax citrulli).